We begin with the raw amino-acid sequence, 247 residues long: Golgi-associated RAB2 interactor protein 5A (247 aa).

A compositionally biased stretch (pro residues) spans 1-16 (MGPPLWPDLQEPPPPG). Disordered stretches follow at residues 1-22 (MGPP…SQIR) and 60-92 (GDIA…PTGR).

The protein belongs to the GARIN family. In terms of assembly, interacts (via N-terminus) with RAB2B (in GTP-bound form).

The protein localises to the golgi apparatus. Functionally, RAB2B effector protein which promotes cytosolic DNA-induced innate immune responses. Regulates IFN responses against DNA viruses by regulating the CGAS-STING signaling axis. This Homo sapiens (Human) protein is Golgi-associated RAB2 interactor protein 5A.